A 467-amino-acid polypeptide reads, in one-letter code: tRNA(Ile)-lysidine synthase (467 aa).

ATP is bound at residue 35–40 (SGGPDS).

This sequence belongs to the tRNA(Ile)-lysidine synthase family.

It is found in the cytoplasm. The enzyme catalyses cytidine(34) in tRNA(Ile2) + L-lysine + ATP = lysidine(34) in tRNA(Ile2) + AMP + diphosphate + H(+). In terms of biological role, ligates lysine onto the cytidine present at position 34 of the AUA codon-specific tRNA(Ile) that contains the anticodon CAU, in an ATP-dependent manner. Cytidine is converted to lysidine, thus changing the amino acid specificity of the tRNA from methionine to isoleucine. This chain is tRNA(Ile)-lysidine synthase, found in Caldanaerobacter subterraneus subsp. tengcongensis (strain DSM 15242 / JCM 11007 / NBRC 100824 / MB4) (Thermoanaerobacter tengcongensis).